A 340-amino-acid polypeptide reads, in one-letter code: Outer membrane protein U (340 aa).

Residues 1 to 21 (MKKTLIALSVSAAAVATGVNA) form the signal peptide.

The protein belongs to the Gram-negative porin family. Homotrimer.

Its subcellular location is the cell outer membrane. Its function is as follows. Forms pores that allow passive diffusion of small molecules across the outer membrane. In Vibrio vulnificus (strain CMCP6), this protein is Outer membrane protein U (ompU).